The sequence spans 292 residues: NAD kinase (292 aa).

D73 (proton acceptor) is an active-site residue. NAD(+)-binding positions include 73–74 (DG), 147–148 (NE), H158, R175, D177, 188–193 (TAYSLS), and Q247.

This sequence belongs to the NAD kinase family. Requires a divalent metal cation as cofactor.

Its subcellular location is the cytoplasm. It catalyses the reaction NAD(+) + ATP = ADP + NADP(+) + H(+). Involved in the regulation of the intracellular balance of NAD and NADP, and is a key enzyme in the biosynthesis of NADP. Catalyzes specifically the phosphorylation on 2'-hydroxyl of the adenosine moiety of NAD to yield NADP. The chain is NAD kinase from Salmonella choleraesuis (strain SC-B67).